The following is a 126-amino-acid chain: uncharacterized protein (126 aa).

Residues 5-25 traverse the membrane as a helical segment; sequence LIQHITSIFVFSFFFLFFFFS.

It localises to the membrane. This is an uncharacterized protein from Saccharomyces cerevisiae (strain ATCC 204508 / S288c) (Baker's yeast).